Reading from the N-terminus, the 257-residue chain is Ras-related protein Rab-26 (257 aa).

A disordered region spans residues 1-53; the sequence is MSRKKTPKSKGGSVPAASTLPAAANGPRLAHPRTARPGPEAPPNGPPQSGRPS. GTP-binding residues include Ser-73, Gly-74, Val-75, Gly-76, Lys-77, Thr-78, Cys-79, Ser-96, and Thr-97. Thr-78 serves as a coordination point for Mg(2+). 2 consecutive short sequence motifs (switch) follow at residues 87–102 and 120–137; these read GAFLAGTFISTVGIDF and DTAGQERFRSVTHAYYRD. Mg(2+) is bound by residues Thr-97 and Asp-120. Positions 123, 178, 179, 181, 209, and 210 each coordinate GTP. Residues Cys-254 and Cys-255 are each lipidated (S-geranylgeranyl cysteine).

It belongs to the small GTPase superfamily. Rab family. As to quaternary structure, interacts with ADRA2B. Interacts with RIMS1. The cofactor is Mg(2+). As to expression, expressed in pancreas, kidney, brain, submandibular gland, and lung.

The protein resides in the cytoplasmic vesicle. The protein localises to the secretory vesicle membrane. Its subcellular location is the golgi apparatus membrane. The catalysed reaction is GTP + H2O = GDP + phosphate + H(+). Regulated by guanine nucleotide exchange factors (GEFs) which promote the exchange of bound GDP for free GTP. Regulated by GTPase activating proteins (GAPs) which increase the GTP hydrolysis activity. Inhibited by GDP dissociation inhibitors (GDIs). Functionally, the small GTPases Rab are key regulators of intracellular membrane trafficking, from the formation of transport vesicles to their fusion with membranes. Rabs cycle between an inactive GDP-bound form and an active GTP-bound form that is able to recruit to membranes different set of downstream effectors directly responsible for vesicle formation, movement, tethering and fusion. RAB26 mediates transport of ADRA2A and ADRA2B from the Golgi to the cell membrane. Plays a role in the maturation of zymogenic granules and in pepsinogen secretion in the stomach. Plays a role in the secretion of amylase from acinar granules in the parotid gland. The sequence is that of Ras-related protein Rab-26 from Rattus norvegicus (Rat).